The primary structure comprises 429 residues: Glutamyl-tRNA reductase (429 aa).

Substrate contacts are provided by residues T50–R53, S108, E113–Q115, and Q119. C51 acts as the Nucleophile in catalysis. G188 to I193 is a binding site for NADP(+).

Belongs to the glutamyl-tRNA reductase family. As to quaternary structure, homodimer.

The catalysed reaction is (S)-4-amino-5-oxopentanoate + tRNA(Glu) + NADP(+) = L-glutamyl-tRNA(Glu) + NADPH + H(+). The protein operates within porphyrin-containing compound metabolism; protoporphyrin-IX biosynthesis; 5-aminolevulinate from L-glutamyl-tRNA(Glu): step 1/2. In terms of biological role, catalyzes the NADPH-dependent reduction of glutamyl-tRNA(Glu) to glutamate 1-semialdehyde (GSA). The polypeptide is Glutamyl-tRNA reductase (Polaromonas naphthalenivorans (strain CJ2)).